The chain runs to 499 residues: Multiphosphoryl transfer protein (499 aa).

The PTS EIIA type-2 domain occupies L2–E142. H62 (tele-phosphohistidine intermediate; for EIIA activity) is an active-site residue. H62 is subject to Phosphohistidine; by HPr. The interval S155 to G285 is m domain. Residues A286–N376 form the HPr 1 domain. The Pros-phosphohistidine intermediate; for HPr 1 activity role is filled by H300. H300 carries the post-translational modification Phosphohistidine. Positions S378–N409 are linker. One can recognise an HPr 2 domain in the interval A410 to E499. At H424 the chain carries Phosphohistidine. Residue H424 is the Pros-phosphohistidine intermediate; for HPr 2 activity of the active site.

The protein localises to the cytoplasm. The phosphoenolpyruvate-dependent sugar phosphotransferase system (sugar PTS), a major carbohydrate active transport system, catalyzes the phosphorylation of incoming sugar substrates concomitantly with their translocation across the cell membrane. The enzyme II FruAB PTS system is involved in fructose transport. The polypeptide is Multiphosphoryl transfer protein (fruB) (Haemophilus influenzae (strain ATCC 51907 / DSM 11121 / KW20 / Rd)).